The primary structure comprises 340 residues: Phenylalanine--tRNA ligase alpha subunit (340 aa).

Glu-255 provides a ligand contact to Mg(2+).

The protein belongs to the class-II aminoacyl-tRNA synthetase family. Phe-tRNA synthetase alpha subunit type 1 subfamily. As to quaternary structure, tetramer of two alpha and two beta subunits. Mg(2+) is required as a cofactor.

It is found in the cytoplasm. The enzyme catalyses tRNA(Phe) + L-phenylalanine + ATP = L-phenylalanyl-tRNA(Phe) + AMP + diphosphate + H(+). This is Phenylalanine--tRNA ligase alpha subunit from Heliobacterium modesticaldum (strain ATCC 51547 / Ice1).